A 285-amino-acid polypeptide reads, in one-letter code: Hypersensitive-induced reaction 1 protein (285 aa).

G2 carries N-myristoyl glycine lipidation. A coiled-coil region spans residues 118–190 (FEQKNEIAKS…EKILQIKRAE (73 aa)).

Homo- and heterodimer. Interacts with LRR1 (via LRR domain). Constitutively expressed in stems, roots and flowers, but not in leaves and fruits.

Its function is as follows. Positive regulator of hypersensitive response (HR)-like cell death. May be involved in potassium ion channel regulation. This is Hypersensitive-induced reaction 1 protein from Capsicum annuum (Capsicum pepper).